The following is a 257-amino-acid chain: Hydroxyacylglutathione hydrolase (257 aa).

Zn(2+) is bound by residues His54, His56, Asp58, His59, His113, Asp137, and His175.

Belongs to the metallo-beta-lactamase superfamily. Glyoxalase II family. As to quaternary structure, monomer. The cofactor is Zn(2+).

The catalysed reaction is an S-(2-hydroxyacyl)glutathione + H2O = a 2-hydroxy carboxylate + glutathione + H(+). The protein operates within secondary metabolite metabolism; methylglyoxal degradation; (R)-lactate from methylglyoxal: step 2/2. In terms of biological role, thiolesterase that catalyzes the hydrolysis of S-D-lactoyl-glutathione to form glutathione and D-lactic acid. This Synechocystis sp. (strain ATCC 27184 / PCC 6803 / Kazusa) protein is Hydroxyacylglutathione hydrolase.